The following is a 227-amino-acid chain: Ureidoacrylate amidohydrolase RutB (227 aa).

Catalysis depends on D22, which acts as the Proton acceptor. Residue K131 is part of the active site. Residue C164 is the Nucleophile of the active site.

It belongs to the isochorismatase family. RutB subfamily.

It carries out the reaction (Z)-3-ureidoacrylate + H2O + H(+) = (Z)-3-aminoacrylate + NH4(+) + CO2. The catalysed reaction is (Z)-3-ureidoacrylate + H2O = (Z)-3-aminoacrylate + carbamate + H(+). The enzyme catalyses (Z)-2-methylureidoacrylate + H2O + H(+) = (Z)-2-methylaminoacrylate + NH4(+) + CO2. In terms of biological role, hydrolyzes ureidoacrylate to form aminoacrylate and carbamate. The carbamate hydrolyzes spontaneously, thereby releasing one of the nitrogen atoms of the pyrimidine ring as ammonia and one of its carbon atoms as CO2. The sequence is that of Ureidoacrylate amidohydrolase RutB from Azorhizobium caulinodans (strain ATCC 43989 / DSM 5975 / JCM 20966 / LMG 6465 / NBRC 14845 / NCIMB 13405 / ORS 571).